The following is a 283-amino-acid chain: MHIVHTIAELRQQLSGFKRPAFVPTMGNLHEGHIALVRQARPLGDVTVSSIFVNRLQFAPHEDFDSYPRTLDADAERLEAAGCDVVFAPREKDLYPEPQTFKVHPATDLSDILEGHFRPGFFIGVSTVVMKLFSCVFAGMPTGVAAFGKKDYQQVMVVRRLVQQFALPIEILAGETQRAEDGLALSSRNSYLSPAERQEAVHLSRALRALGEAARAATGQPDLAALESQALQALARRGWKPDYLTVRRRADLAPPQGALADVPLVVLGAAKLGNTRLIDNLEI.

26–33 (MGNLHEGH) provides a ligand contact to ATP. The Proton donor role is filled by H33. Q57 is a (R)-pantoate binding site. Q57 lines the beta-alanine pocket. 148–151 (GKKD) is a binding site for ATP. A (R)-pantoate-binding site is contributed by Q154. An ATP-binding site is contributed by 185 to 188 (LSSR).

Belongs to the pantothenate synthetase family. In terms of assembly, homodimer.

Its subcellular location is the cytoplasm. The enzyme catalyses (R)-pantoate + beta-alanine + ATP = (R)-pantothenate + AMP + diphosphate + H(+). The protein operates within cofactor biosynthesis; (R)-pantothenate biosynthesis; (R)-pantothenate from (R)-pantoate and beta-alanine: step 1/1. Its function is as follows. Catalyzes the condensation of pantoate with beta-alanine in an ATP-dependent reaction via a pantoyl-adenylate intermediate. This chain is Pantothenate synthetase, found in Polaromonas naphthalenivorans (strain CJ2).